Reading from the N-terminus, the 421-residue chain is O-glycoside alpha-1,2-mannosyltransferase homolog 5 (421 aa).

Glu318 functions as the Nucleophile in the catalytic mechanism.

Belongs to the glycosyltransferase 15 family.

The protein localises to the cytoplasm. Probable mannosyltransferase involved in O-glycosylation of cell wall and secreted proteins. This chain is O-glycoside alpha-1,2-mannosyltransferase homolog 5 (omh5), found in Schizosaccharomyces pombe (strain 972 / ATCC 24843) (Fission yeast).